The chain runs to 485 residues: Pup--protein ligase (485 aa).

Mg(2+) is bound at residue E33. R76 lines the ATP pocket. Y78 provides a ligand contact to Mg(2+). D80 (proton acceptor) is an active-site residue. E86 is a binding site for Mg(2+). Positions 89 and 451 each coordinate ATP.

The protein belongs to the Pup ligase/Pup deamidase family. Pup-conjugating enzyme subfamily.

The catalysed reaction is ATP + [prokaryotic ubiquitin-like protein]-L-glutamate + [protein]-L-lysine = ADP + phosphate + N(6)-([prokaryotic ubiquitin-like protein]-gamma-L-glutamyl)-[protein]-L-lysine.. The protein operates within protein degradation; proteasomal Pup-dependent pathway. It functions in the pathway protein modification; protein pupylation. Catalyzes the covalent attachment of the prokaryotic ubiquitin-like protein modifier Pup to the proteasomal substrate proteins, thereby targeting them for proteasomal degradation. This tagging system is termed pupylation. The ligation reaction involves the side-chain carboxylate of the C-terminal glutamate of Pup and the side-chain amino group of a substrate lysine. This Bifidobacterium longum subsp. infantis (strain ATCC 15697 / DSM 20088 / JCM 1222 / NCTC 11817 / S12) protein is Pup--protein ligase.